We begin with the raw amino-acid sequence, 342 residues long: Polycomb group RING finger protein 2 (342 aa).

The segment at 18-57 adopts an RING-type zinc-finger fold; sequence CALCGGYFIDATTIVECLHSFCKTCIVRYLETNKYCPMCD. Residues Lys-51 and Lys-88 each participate in a glycyl lysine isopeptide (Lys-Gly) (interchain with G-Cter in SUMO2) cross-link. The short motif at 81-95 is the Nuclear localization signal element; that stretch reads KLVPGLFKDEMKRRR. Thr-237 carries the post-translational modification Phosphothreonine; by PKA. The segment at 237 to 342 is disordered; sequence TLPTVPTPSE…MTVNGAPCPP (106 aa). Residues 243 to 253 show a composition bias toward polar residues; it reads TPSEGTNTSGA. Low complexity predominate over residues 263-318; it reads APSPATLPATSSSLPSPATPSHGSPSSHGPPATHPTSPTPPSTAAGTTTATNGGTS. A compositionally biased stretch (polar residues) spans 319–328; the sequence is NCLQTPSSTS. Thr-334 is modified (phosphothreonine; by PKA).

As to quaternary structure, exists as both a monomer and homodimer. Component of a PRC1-like complex. Interacts with CBX8, RING1 and RNF2. Interacts with CBX7. Interacts with PHC2. Phosphorylated. Homodimer formation is regulated by phosphorylation with only unphosphorylated proteins forming homodimers. In terms of tissue distribution, expressed in embryonic stem cells. Expressed in a variety of tumor cells and in neural tissues.

It is found in the nucleus. Its function is as follows. Transcriptional repressor. Binds specifically to the DNA sequence 5'-GACTNGACT-3'. Has tumor suppressor activity. May play a role in control of cell proliferation and/or neural cell development. Regulates proliferation of early T progenitor cells by maintaining expression of HES1. Also plays a role in antero-posterior specification of the axial skeleton and negative regulation of the self-renewal activity of hematopoietic stem cells. Component of a Polycomb group (PcG) multiprotein PRC1-like complex, a complex class required to maintain the transcriptionally repressive state of many genes, including Hox genes, throughout development. PcG PRC1 complex acts via chromatin remodeling and modification of histones; it mediates monoubiquitination of histone H2A 'Lys-119', rendering chromatin heritably changed in its expressibility. Within the PRC1-like complex, regulates RNF2 ubiquitin ligase activity. This is Polycomb group RING finger protein 2 (Pcgf2) from Mus musculus (Mouse).